A 361-amino-acid chain; its full sequence is S-adenosylmethionine decarboxylase proenzyme (361 aa).

Catalysis depends on residues glutamate 8 and glutamate 11. Serine 68 (schiff-base intermediate with substrate; via pyruvic acid) is an active-site residue. A Pyruvic acid (Ser); by autocatalysis modification is found at serine 68. The Proton donor; for catalytic activity role is filled by cysteine 82. Catalysis depends on proton acceptor; for processing activity residues serine 234 and histidine 247. Residues 341 to 361 (SCGSPRSTLHRCWSETENEEE) form a disordered region.

It belongs to the eukaryotic AdoMetDC family. It depends on pyruvate as a cofactor. In terms of processing, is synthesized initially as an inactive proenzyme. Formation of the active enzyme involves a self-maturation process in which the active site pyruvoyl group is generated from an internal serine residue via an autocatalytic post-translational modification. Two non-identical subunits are generated from the proenzyme in this reaction, and the pyruvate is formed at the N-terminus of the alpha chain, which is derived from the carboxyl end of the proenzyme. The post-translation cleavage follows an unusual pathway, termed non-hydrolytic serinolysis, in which the side chain hydroxyl group of the serine supplies its oxygen atom to form the C-terminus of the beta chain, while the remainder of the serine residue undergoes an oxidative deamination to produce ammonia and the pyruvoyl group blocking the N-terminus of the alpha chain.

It carries out the reaction S-adenosyl-L-methionine + H(+) = S-adenosyl 3-(methylsulfanyl)propylamine + CO2. Its pathway is amine and polyamine biosynthesis; S-adenosylmethioninamine biosynthesis; S-adenosylmethioninamine from S-adenosyl-L-methionine: step 1/1. This chain is S-adenosylmethionine decarboxylase proenzyme (SAMDC), found in Helianthus annuus (Common sunflower).